The following is a 187-amino-acid chain: Adenylate kinase (187 aa).

10-15 (GSGKGT) serves as a coordination point for ATP. An NMP region spans residues 30–59 (STGDLLRAEVAAGSPLGLKAKEVMARGDLV). AMP is bound by residues Thr-31, Arg-36, 57–59 (DLV), 85–88 (GYPR), and Gln-92. Residues 126 to 136 (GRAKAEGREDD) are LID. Position 127 (Arg-127) interacts with ATP. AMP contacts are provided by Arg-133 and Arg-144. Gly-172 provides a ligand contact to ATP.

It belongs to the adenylate kinase family. Monomer.

It localises to the cytoplasm. The enzyme catalyses AMP + ATP = 2 ADP. It participates in purine metabolism; AMP biosynthesis via salvage pathway; AMP from ADP: step 1/1. In terms of biological role, catalyzes the reversible transfer of the terminal phosphate group between ATP and AMP. Plays an important role in cellular energy homeostasis and in adenine nucleotide metabolism. This Xanthomonas oryzae pv. oryzae (strain MAFF 311018) protein is Adenylate kinase.